The primary structure comprises 313 residues: Fructose-1,6-bisphosphatase class 1 (313 aa).

Residues glutamate 90, aspartate 111, leucine 113, and aspartate 114 each coordinate Mg(2+). Substrate-binding positions include 114–117, tyrosine 222, and lysine 253; that span reads DGSS. Residue glutamate 259 participates in Mg(2+) binding.

This sequence belongs to the FBPase class 1 family. Homotetramer. Mg(2+) is required as a cofactor.

It is found in the cytoplasm. It catalyses the reaction beta-D-fructose 1,6-bisphosphate + H2O = beta-D-fructose 6-phosphate + phosphate. It participates in carbohydrate biosynthesis; gluconeogenesis. The protein is Fructose-1,6-bisphosphatase class 1 of Geotalea uraniireducens (strain Rf4) (Geobacter uraniireducens).